The sequence spans 166 residues: 3-hydroxyacyl-[acyl-carrier-protein] dehydratase, mitochondrial (166 aa).

Residues 1 to 17 (MLAKTVFPRGLLVLRSF) constitute a mitochondrion transit peptide. The MaoC-like domain maps to 34–125 (ETRVFSSEDI…VQAIALRETK (92 aa)).

In terms of assembly, homodimer. As to expression, expressed in leaves, roots, siliques and flowers.

It is found in the mitochondrion. It catalyses the reaction a (3R)-hydroxyacyl-[ACP] = a (2E)-enoyl-[ACP] + H2O. The enzyme catalyses (3R)-hydroxyhexadecanoyl-[ACP] = (2E)-hexadecenoyl-[ACP] + H2O. It carries out the reaction (3R)-hydroxydecanoyl-[ACP] = (2E)-decenoyl-[ACP] + H2O. It participates in lipid metabolism; fatty acid biosynthesis. Functionally, 3-hydroxyl-[acyl-carrier-protein] (3-hydroxyl-ACP) dehydratase required for mitochondrial fatty acid synthesis (mtFAS). MtFAS are essential for photorespiration and plant development, probably by influencing mitochondrial membrane lipid composition and other lipid metabolic pathways. The sequence is that of 3-hydroxyacyl-[acyl-carrier-protein] dehydratase, mitochondrial from Arabidopsis thaliana (Mouse-ear cress).